Reading from the N-terminus, the 928-residue chain is RhoGEF domain-containing protein gxcH (928 aa).

Low complexity predominate over residues 30 to 48 (SKSFDNNNNNNSNTNNIKN). 3 disordered regions span residues 30–76 (SKSF…PPVP), 90–201 (ITNY…PPLG), and 318–410 (DNGV…NKDT). A compositionally biased stretch (polar residues) spans 93–103 (YIPTTPPSINI). Residues 112–123 (DNYDDNYDDNYS) show a composition bias toward acidic residues. Polar residues-rich tracts occupy residues 129-141 (TSTT…SPEF), 175-187 (ETFN…EGLQ), and 334-367 (KSGT…NLRG). The segment covering 377-407 (NQTTNKNNSNNNNNNTTTNNNNNNNNNNNNN) has biased composition (low complexity). The region spanning 484-671 (IFNKVVKEII…GKIVSDINGK (188 aa)) is the DH domain. Residues 699–807 (FIGEGKVKKV…NKIEDQIVSE (109 aa)) form a PH-like region. The disordered stretch occupies residues 835–928 (SDSQSDFVDH…NTEPENFSFY (94 aa)). The span at 848–857 (QEQQEQQQQQ) shows a compositional bias: low complexity.

Functionally, GTPase-activating protein. The sequence is that of RhoGEF domain-containing protein gxcH (gxcH) from Dictyostelium discoideum (Social amoeba).